The sequence spans 538 residues: Phosphoenolpyruvate carboxykinase (ATP) (538 aa).

Arginine 64, tyrosine 205, and lysine 211 together coordinate substrate. ATP-binding positions include lysine 211, histidine 230, and 246 to 254; that span reads GLSGTGKTT. The Mn(2+) site is built by lysine 211 and histidine 230. A Mn(2+)-binding site is contributed by aspartate 267. ATP-binding positions include glutamate 295, arginine 331, 447 to 448, and threonine 453; that span reads RI. A substrate-binding site is contributed by arginine 331.

The protein belongs to the phosphoenolpyruvate carboxykinase (ATP) family. In terms of assembly, monomer. The cofactor is Mn(2+).

Its subcellular location is the cytoplasm. The catalysed reaction is oxaloacetate + ATP = phosphoenolpyruvate + ADP + CO2. The protein operates within carbohydrate biosynthesis; gluconeogenesis. Involved in the gluconeogenesis. Catalyzes the conversion of oxaloacetate (OAA) to phosphoenolpyruvate (PEP) through direct phosphoryl transfer between the nucleoside triphosphate and OAA. In Haemophilus influenzae (strain PittEE), this protein is Phosphoenolpyruvate carboxykinase (ATP).